We begin with the raw amino-acid sequence, 328 residues long: Glucokinase (328 aa).

16–21 (ADIGGT) is an ATP binding site.

It belongs to the bacterial glucokinase family.

Its subcellular location is the cytoplasm. It carries out the reaction D-glucose + ATP = D-glucose 6-phosphate + ADP + H(+). This chain is Glucokinase, found in Neisseria gonorrhoeae (strain ATCC 700825 / FA 1090).